We begin with the raw amino-acid sequence, 432 residues long: MADVKIQSESESSDSHPVVDNQPPPPPPPPQQPAKEEENQPKTSPTPPPHWMRYPPTVIIPHQMMYAPPPFPPYHQYPNHHHLHHQSRGNKHQNAFNGENKTIWVGDLHHWMDEAYLNSSFASGDEREIVSVKVIRNKNNGLSEGYGFVEFESHDVADKVLREFNGTTMPNTDQPFRLNWASFSTGEKRLENNGPDLSIFVGDLSPDVSDNLLHETFSEKYPSVKAAKVVLDANTGRSKGYGFVRFGDENERTKAMTEMNGVKCSSRAMRIGPATPRKTNGYQQQGGYMPNGTLTRPEGDIMNTTIFVGGLDSSVTDEDLKQPFNEFGEIVSVKIPVGKGCGFVQFVNRPNAEEALEKLNGTVIGKQTVRLSWGRNPANKQPRDKYGNQWVDPYYGGQFYNGYGYMVPQPDPRMYPAAPYYPMYGGHQQQVS.

A disordered region spans residues 1–55; sequence MADVKIQSESESSDSHPVVDNQPPPPPPPPQQPAKEEENQPKTSPTPPPHWMRYP. The span at 22–32 shows a compositional bias: pro residues; the sequence is QPPPPPPPPQQ. RRM domains follow at residues 101–183 and 197–276; these read KTIW…WASF and LSIF…PATP. The tract at residues 271–293 is disordered; the sequence is IGPATPRKTNGYQQQGGYMPNGT. Polar residues predominate over residues 277–286; that stretch reads RKTNGYQQQG. The region spanning 304 to 376 is the RRM 3 domain; the sequence is TTIFVGGLDS…QTVRLSWGRN (73 aa).

Belongs to the polyadenylate-binding RBP47 family. As to quaternary structure, interacts with the poly(A) tail of mRNA in nucleus. In terms of tissue distribution, expressed in leaves, stems, flowers, and seedlings.

Its subcellular location is the nucleus. It is found in the cytoplasmic granule. In terms of biological role, heterogeneous nuclear ribonucleoprotein (hnRNP)-protein binding the poly(A) tail of mRNA and probably involved in some steps of pre-mRNA maturation. This Arabidopsis thaliana (Mouse-ear cress) protein is Polyadenylate-binding protein RBP47C (RBP47C).